Consider the following 231-residue polypeptide: Ribonuclease HI (231 aa).

An RNase H type-1 domain is found at 1–146 (MRERAVAACD…ADRAASQAAV (146 aa)). Residues D10, E50, D72, and D138 each contribute to the Mg(2+) site. Composition is skewed to low complexity over residues 148-157 (QEAAGSALGS) and 166-181 (VPAA…SGAA). 2 disordered regions span residues 148–192 (QEAA…SART) and 212–231 (PIAK…VAAG).

It belongs to the RNase H family. Monomer. Mg(2+) serves as cofactor.

Its subcellular location is the cytoplasm. It catalyses the reaction Endonucleolytic cleavage to 5'-phosphomonoester.. Endonuclease that specifically degrades the RNA of RNA-DNA hybrids. The protein is Ribonuclease HI (rnhA) of Streptomyces coelicolor (strain ATCC BAA-471 / A3(2) / M145).